We begin with the raw amino-acid sequence, 258 residues long: NAD(P)H-hydrate epimerase (258 aa).

Positions 15–244 (AFQLDQELMS…RIAKEYGIED (230 aa)) constitute a YjeF N-terminal domain. 75–79 (NNGGD) serves as a coordination point for (6S)-NADPHX. Residues Asn76 and Asp145 each coordinate K(+). Residues 149–155 (GFSFKPP) and Asp181 each bind (6S)-NADPHX. K(+) is bound at residue Ser184.

Belongs to the NnrE/AIBP family. It depends on K(+) as a cofactor.

Its subcellular location is the cytoplasm. The protein localises to the mitochondrion. It carries out the reaction (6R)-NADHX = (6S)-NADHX. It catalyses the reaction (6R)-NADPHX = (6S)-NADPHX. Catalyzes the epimerization of the S- and R-forms of NAD(P)HX, a damaged form of NAD(P)H that is a result of enzymatic or heat-dependent hydration. This is a prerequisite for the S-specific NAD(P)H-hydrate dehydratase to allow the repair of both epimers of NAD(P)HX. The protein is NAD(P)H-hydrate epimerase of Candida albicans (strain WO-1) (Yeast).